Consider the following 257-residue polypeptide: Imidazole glycerol phosphate synthase subunit HisF (257 aa).

Residues aspartate 11 and aspartate 130 contribute to the active site.

The protein belongs to the HisA/HisF family. In terms of assembly, heterodimer of HisH and HisF.

It is found in the cytoplasm. The catalysed reaction is 5-[(5-phospho-1-deoxy-D-ribulos-1-ylimino)methylamino]-1-(5-phospho-beta-D-ribosyl)imidazole-4-carboxamide + L-glutamine = D-erythro-1-(imidazol-4-yl)glycerol 3-phosphate + 5-amino-1-(5-phospho-beta-D-ribosyl)imidazole-4-carboxamide + L-glutamate + H(+). The protein operates within amino-acid biosynthesis; L-histidine biosynthesis; L-histidine from 5-phospho-alpha-D-ribose 1-diphosphate: step 5/9. Functionally, IGPS catalyzes the conversion of PRFAR and glutamine to IGP, AICAR and glutamate. The HisF subunit catalyzes the cyclization activity that produces IGP and AICAR from PRFAR using the ammonia provided by the HisH subunit. The polypeptide is Imidazole glycerol phosphate synthase subunit HisF (Xylella fastidiosa (strain M23)).